A 360-amino-acid polypeptide reads, in one-letter code: GDSL esterase/lipase At1g58430 (360 aa).

Residues 1–23 form the signal peptide; that stretch reads MWTSKTISFTLFITTTLLGSCNA. An N-linked (GlcNAc...) asparagine glycan is attached at asparagine 22. Serine 42 serves as the catalytic Nucleophile. 2 N-linked (GlcNAc...) asparagine glycosylation sites follow: asparagine 104 and asparagine 326. Catalysis depends on residues aspartate 334 and histidine 337.

It belongs to the 'GDSL' lipolytic enzyme family.

Its subcellular location is the secreted. This chain is GDSL esterase/lipase At1g58430, found in Arabidopsis thaliana (Mouse-ear cress).